The chain runs to 260 residues: MLIEDENIRYGGAQADVEDDAARKAQERELKKAEVRKRMEEAAKKGSKKKGFLTPERKKKLRKLLMMKAAEDLKQQQMLKEQERQKTLQQRTIPLPDVDSINDQGQLLKIYEDMFARVCALEEEKFDINFGVSQTEAEINQLTIQVNDLRGKFVKPTLKKVSKYDNKFKSSGEVKEKSNFRNNLKVVKKETDLDEIMAKKKGTADGKPEWSKKEKKEEEAAPVELAAPVEPEAEPEPEAAEPAAEEPEAEEEEEEEEEEE.

Residues 192 to 219 show a composition bias toward basic and acidic residues; it reads DLDEIMAKKKGTADGKPEWSKKEKKEEE. The segment at 192-260 is disordered; it reads DLDEIMAKKK…EEEEEEEEEE (69 aa). Residues 231–260 show a composition bias toward acidic residues; that stretch reads PEAEPEPEAAEPAAEEPEAEEEEEEEEEEE.

The protein belongs to the troponin I family. In terms of tissue distribution, expressed in body wall muscle from first larval stage to adult. In adults expression is predominantly in vulval and anal muscles, body wall muscle expression is weaker. Also expressed in vulval muscles of hermaphrodites and the sex muscles of males.

Troponin I is the inhibitory subunit of troponin, the thin filament regulatory complex which confers calcium-sensitivity to muscle actomyosin ATPase activity. The polypeptide is Troponin I 3 (tni-3) (Caenorhabditis elegans).